Consider the following 198-residue polypeptide: Transcription factor FapR (198 aa).

The region spanning 102-168 (TRIARGHHLF…GRTVVDVNSY (67 aa)) is the MaoC-like domain.

It belongs to the FapR family.

Its function is as follows. Transcriptional factor involved in regulation of membrane lipid biosynthesis by repressing genes involved in fatty acid and phospholipid metabolism. The polypeptide is Transcription factor FapR (Geobacillus thermodenitrificans (strain NG80-2)).